A 242-amino-acid polypeptide reads, in one-letter code: Phosphatidylcholine synthase (242 aa).

Residues 1–15 are Cytoplasmic-facing; it reads MKIFNYKRVPYAEMR. The helical transmembrane segment at 16-36 threads the bilayer; sequence AFSVHILTASGSFLAFLGVVA. Residues 37–41 are Periplasmic-facing; that stretch reads AAEHR. A helical transmembrane segment spans residues 42–62; sequence FIDMFWWLGLALLVDGIDGPI. At 63 to 76 the chain is on the cytoplasmic side; the sequence is ARKVRVKEVLPNWS. A helical membrane pass occupies residues 77 to 97; that stretch reads GDTLDNIIDYVTYVLLPAFAL. The Periplasmic segment spans residues 98–100; that stretch reads YQS. A helical membrane pass occupies residues 101 to 121; sequence GMIGEPWSFVAAGMIVVSSAI. Residues 122 to 133 lie on the Cytoplasmic side of the membrane; that stretch reads YYADMGMKTDEY. Residues 134–154 traverse the membrane as a helical segment; that stretch reads FFSGFPVVWNMIVFTLFVIDA. The Periplasmic portion of the chain corresponds to 155-159; that stretch reads SATTA. Residues 160–180 form a helical membrane-spanning segment; it reads LTVVIVSVVLTFLPINFLHPV. Over 181–187 the chain is Cytoplasmic; the sequence is RVKRLRP. The helical transmembrane segment at 188–208 threads the bilayer; the sequence is LNLGVFFLWSALGIFSLLMHF. Over 209–214 the chain is Periplasmic; sequence DTPEWA. A helical transmembrane segment spans residues 215–235; the sequence is LILFIVTGAYLYVIGAVLQFF. The Cytoplasmic portion of the chain corresponds to 236–242; it reads PALGRET.

It belongs to the CDP-alcohol phosphatidyltransferase class-I family. Requires Mn(2+) as cofactor.

The protein resides in the cell inner membrane. The catalysed reaction is a CDP-1,2-diacyl-sn-glycerol + choline = a 1,2-diacyl-sn-glycero-3-phosphocholine + CMP + H(+). Condenses choline with CDP-diglyceride to produce phosphatidylcholine and CMP. In Rhizobium johnstonii (strain DSM 114642 / LMG 32736 / 3841) (Rhizobium leguminosarum bv. viciae), this protein is Phosphatidylcholine synthase.